The sequence spans 304 residues: UDP-N-acetylenolpyruvoylglucosamine reductase (304 aa).

Residues 33 to 213 enclose the FAD-binding PCMH-type domain; that stretch reads IGGPADIMVI…LEITRDLTER (181 aa). R177 is an active-site residue. The active-site Proton donor is S227. E297 is a catalytic residue.

It belongs to the MurB family. FAD serves as cofactor.

The protein localises to the cytoplasm. The catalysed reaction is UDP-N-acetyl-alpha-D-muramate + NADP(+) = UDP-N-acetyl-3-O-(1-carboxyvinyl)-alpha-D-glucosamine + NADPH + H(+). Its pathway is cell wall biogenesis; peptidoglycan biosynthesis. Cell wall formation. The polypeptide is UDP-N-acetylenolpyruvoylglucosamine reductase (Alkaliphilus oremlandii (strain OhILAs) (Clostridium oremlandii (strain OhILAs))).